The chain runs to 550 residues: Arginine--tRNA ligase (550 aa).

The 'HIGH' region motif lies at 130–140 (ANPTGPIHLGG).

Belongs to the class-I aminoacyl-tRNA synthetase family. Monomer.

It is found in the cytoplasm. It carries out the reaction tRNA(Arg) + L-arginine + ATP = L-arginyl-tRNA(Arg) + AMP + diphosphate. This Rhodococcus erythropolis (strain PR4 / NBRC 100887) protein is Arginine--tRNA ligase.